The chain runs to 210 residues: DNA-directed RNA polymerase III subunit rpc31 (210 aa).

A Phosphoserine modification is found at serine 103. A disordered region spans residues 151–210 (KDESSEAAHPNIEEEPDEGLEEEDEDFGDDDDNDYGENYFDNGEGDDYDDYDGDEGAIYE). Acidic residues-rich tracts occupy residues 163–185 (EEEP…DNDY) and 193–210 (GEGD…AIYE).

This sequence belongs to the eukaryotic RPC7 RNA polymerase subunit family. As to quaternary structure, component of the RNA polymerase III (Pol III) complex.

The protein localises to the cytoplasm. It is found in the nucleus. Its function is as follows. DNA-dependent RNA polymerase catalyzes the transcription of DNA into RNA using the four ribonucleoside triphosphates as substrates. Specific peripheric component of RNA polymerase III which synthesizes small RNAs, such as 5S rRNA and tRNAs. The sequence is that of DNA-directed RNA polymerase III subunit rpc31 (rpc31) from Schizosaccharomyces pombe (strain 972 / ATCC 24843) (Fission yeast).